Reading from the N-terminus, the 372-residue chain is F-box protein AFR (372 aa).

Residues 1 to 15 (MAEQETTSNINTIND) show a composition bias toward polar residues. Residues 1 to 27 (MAEQETTSNINTINDQAEEETRTKSQP) are disordered. The F-box domain occupies 29 to 74 (ISGLPNDIAELCLLRLPYPYHALYRSVSSSWNKTITNPRFLFSKQS). 5 Kelch repeats span residues 80 to 126 (PYLF…HALS), 135 to 178 (KLFV…NVNG), 179 to 227 (KIMA…VIGK), 229 to 276 (MCVT…IRDR), and 279 to 325 (VISE…DRVF).

In terms of assembly, part of a SCF (ASK-cullin-F-box) protein ligase complex. Interacts with SKP1A.

Its pathway is protein modification; protein ubiquitination. Component of SCF (ASK-cullin-F-box) E3 ubiquitin ligase complexes, which may mediate the ubiquitination and subsequent proteasomal degradation of target proteins. Part of the phyA-mediated signaling transduction pathway leading to the regulation of gene expression and hypocotyls elongation in response to red and far-red light exposure. In Arabidopsis thaliana (Mouse-ear cress), this protein is F-box protein AFR (AFR).